The sequence spans 346 residues: Centromere protein L (346 aa).

S41 is modified (phosphoserine). Residue T45 is modified to Phosphothreonine. S55 carries the phosphoserine modification.

It belongs to the CENP-L/IML3 family. As to quaternary structure, component of the CENPA-CAD complex, composed of CENPI, CENPK, CENPL, CENPO, CENPP, CENPQ, CENPR and CENPS. The CENPA-CAD complex interacts with the CENPA-NAC complex, at least composed of CENPA, CENPC, CENPH, CENPM, CENPN, CENPT and CENPU.

The protein resides in the nucleus. It is found in the chromosome. It localises to the centromere. In terms of biological role, component of the CENPA-CAD (nucleosome distal) complex, a complex recruited to centromeres which is involved in assembly of kinetochore proteins, mitotic progression and chromosome segregation. May be involved in incorporation of newly synthesized CENPA into centromeres via its interaction with the CENPA-NAC complex. The chain is Centromere protein L (CENPL) from Bos taurus (Bovine).